Consider the following 1066-residue polypeptide: Exportin-T (1066 aa).

Belongs to the exportin family.

The protein resides in the nucleus. It localises to the cytoplasm. Its function is as follows. tRNA nucleus export receptor which facilitates tRNA translocation across the nuclear pore complex. Involved in pre-tRNA splicing, probably by affecting the interaction of pre-tRNA with splicing endonuclease. This chain is Exportin-T (LOS1), found in Laccaria bicolor (strain S238N-H82 / ATCC MYA-4686) (Bicoloured deceiver).